Here is an 820-residue protein sequence, read N- to C-terminus: MNISYNWLKEYVNFDLTPDETAAALTSIGLETGGVEEVQTIKGGLEGLVIGEVLTCEEHPNSDHLHITTVNLGDGEPVQIVCGAPNVAAGQKVVVATLGTKLYDGDECFTIKKSKIRGVESTGMICAEDEIGIGTDHAGIIVLPAEAVPGTLAKDYYNIKSDYVLEVDITPNRADACSHYGVARDLYAYLIQNGKQATLQRPSVDGFKVENHDLDIEVVVENSEACPHYAGVTVKGVTVKESPEWLQNKLRLIGVRPINNVVDITNYIVHAFGQPLHCFDAGKIKGNEVIVKTLPEGTPFVTLDEVERKLSERDLMICNKEEAMCIAGVFGGLDSGSTEATTDVFIESAYFHPTWVRKTARRHGLNTDASFRFERGIDPNGVIYCLKLAALMVKELAGGTISSEIKDVCVAVPQDFMVELSYEKVNSLIGKVIPVETIKSIVTSLEMKIMNETVDGLTLAVPPYRVDVQRDCDVIEDILRIYGYNNVEIPTTLNSSLTTKGEHDKSNKLQNLVAEQLVGCGFNEILNNSLTRAAYYDGLENYSSNHLVMLLNPLSADLNCMRQTLLFGGLESIAHNANRKNADLKFFEFGNCYYFDADKKNPEKVLATYSEDYHLGLWVTGKKVANSWAHPDENSSVYELKAYVENILKRLGLDLHNLVVGNLTDDIFATALSVHTKGGKRLASFGVVTKKLLKAFDIDNEVYYADLNWKELMKAIRSVKISYKEISKFPAVKRDLALLLDKNVQFAEIEKIAYDTEKKLLKEVELFDVYEGKNIEAGKKSYAVSFLLQDETQTLNDKMIDKIMSKLVKNLEDKLNAKLR.

The 113-residue stretch at 42-154 folds into the tRNA-binding domain; that stretch reads KGGLEGLVIG…AEAVPGTLAK (113 aa). A B5 domain is found at 413-489; sequence PQDFMVELSY…RIYGYNNVEI (77 aa). The Mg(2+) site is built by aspartate 467, aspartate 473, glutamate 476, and aspartate 477. In terms of domain architecture, FDX-ACB spans 727-820; sequence SKFPAVKRDL…LEDKLNAKLR (94 aa).

The protein belongs to the phenylalanyl-tRNA synthetase beta subunit family. Type 1 subfamily. As to quaternary structure, tetramer of two alpha and two beta subunits. Mg(2+) serves as cofactor.

It is found in the cytoplasm. The enzyme catalyses tRNA(Phe) + L-phenylalanine + ATP = L-phenylalanyl-tRNA(Phe) + AMP + diphosphate + H(+). The sequence is that of Phenylalanine--tRNA ligase beta subunit from Bacteroides thetaiotaomicron (strain ATCC 29148 / DSM 2079 / JCM 5827 / CCUG 10774 / NCTC 10582 / VPI-5482 / E50).